The primary structure comprises 558 residues: Potassium-transporting ATPase potassium-binding subunit (558 aa).

A run of 11 helical transmembrane segments spans residues 1–21 (MDTLAGILQVASVVLVLVLIH), 59–79 (PAYLRAVLAFSLVGVLVVYGL), 85–105 (FLPYALGLPAVPEGLSFNTAV), 130–150 (GLAVQNFVSAAVGIAVAIALV), 179–199 (LSLVTAVILIAGGVIQNFAGF), 245–265 (PTAWTSAFQVILMLAIPFSLP), 279–299 (TAIVAVMATIFVVSFTALTIF), 374–394 (GLYGMLILAVISVFVAGLLVG), 416–436 (ILVTPILVLVGTALSFAIPAV), 484–504 (ALGVAMLLGRFLPIVFVLALA), and 527–547 (FVGLLIGVTVIVTALTYFPVL).

The protein belongs to the KdpA family. As to quaternary structure, the system is composed of three essential subunits: KdpA, KdpB and KdpC.

The protein localises to the cell membrane. Part of the high-affinity ATP-driven potassium transport (or Kdp) system, which catalyzes the hydrolysis of ATP coupled with the electrogenic transport of potassium into the cytoplasm. This subunit binds the extracellular potassium ions and delivers the ions to the membrane domain of KdpB through an intramembrane tunnel. In Clavibacter michiganensis subsp. michiganensis (strain NCPPB 382), this protein is Potassium-transporting ATPase potassium-binding subunit.